The following is a 351-amino-acid chain: Anthranilate phosphoribosyltransferase (351 aa).

5-phospho-alpha-D-ribose 1-diphosphate is bound by residues G92, 95-96 (GD), T100, 102-105 (NIST), 120-128 (KHGNRAASS), and S132. G92 serves as a coordination point for anthranilate. A Mg(2+)-binding site is contributed by S104. Residue N123 participates in anthranilate binding. Residue R178 participates in anthranilate binding. Mg(2+) contacts are provided by D236 and E237.

This sequence belongs to the anthranilate phosphoribosyltransferase family. Homodimer. Mg(2+) serves as cofactor.

It catalyses the reaction N-(5-phospho-beta-D-ribosyl)anthranilate + diphosphate = 5-phospho-alpha-D-ribose 1-diphosphate + anthranilate. The protein operates within amino-acid biosynthesis; L-tryptophan biosynthesis; L-tryptophan from chorismate: step 2/5. In terms of biological role, catalyzes the transfer of the phosphoribosyl group of 5-phosphorylribose-1-pyrophosphate (PRPP) to anthranilate to yield N-(5'-phosphoribosyl)-anthranilate (PRA). The chain is Anthranilate phosphoribosyltransferase from Deinococcus geothermalis (strain DSM 11300 / CIP 105573 / AG-3a).